The primary structure comprises 938 residues: Isoleucine--tRNA ligase (938 aa).

The 'HIGH' region motif lies at 58–68 (PYANGSIHIGH). Lys-183 carries the N6-acetyllysine modification. Glu-561 is an L-isoleucyl-5'-AMP binding site. Positions 602 to 606 (KMSKS) match the 'KMSKS' region motif. Lys-605 provides a ligand contact to ATP. 4 residues coordinate Zn(2+): Cys-901, Cys-904, Cys-921, and Cys-924.

The protein belongs to the class-I aminoacyl-tRNA synthetase family. IleS type 1 subfamily. Monomer. Zn(2+) is required as a cofactor.

The protein resides in the cytoplasm. It carries out the reaction tRNA(Ile) + L-isoleucine + ATP = L-isoleucyl-tRNA(Ile) + AMP + diphosphate. Catalyzes the attachment of isoleucine to tRNA(Ile). As IleRS can inadvertently accommodate and process structurally similar amino acids such as valine, to avoid such errors it has two additional distinct tRNA(Ile)-dependent editing activities. One activity is designated as 'pretransfer' editing and involves the hydrolysis of activated Val-AMP. The other activity is designated 'posttransfer' editing and involves deacylation of mischarged Val-tRNA(Ile). The protein is Isoleucine--tRNA ligase of Escherichia coli O6:K15:H31 (strain 536 / UPEC).